The chain runs to 446 residues: Tubulin beta-8 chain (446 aa).

GTP is bound by residues glutamine 11, glutamate 69, serine 138, glycine 142, threonine 143, glycine 144, asparagine 204, and asparagine 226. Glutamate 69 provides a ligand contact to Mg(2+). Residues 426-446 form a disordered region; that stretch reads QDATAEDDYDEDDDAAAADEA. Over residues 429–446 the composition is skewed to acidic residues; it reads TAEDDYDEDDDAAAADEA.

It belongs to the tubulin family. In terms of assembly, dimer of alpha and beta chains. A typical microtubule is a hollow water-filled tube with an outer diameter of 25 nm and an inner diameter of 15 nM. Alpha-beta heterodimers associate head-to-tail to form protofilaments running lengthwise along the microtubule wall with the beta-tubulin subunit facing the microtubule plus end conferring a structural polarity. Microtubules usually have 13 protofilaments but different protofilament numbers can be found in some organisms and specialized cells. The cofactor is Mg(2+). Expressed in anthers.

It is found in the cytoplasm. The protein resides in the cytoskeleton. In terms of biological role, tubulin is the major constituent of microtubules, a cylinder consisting of laterally associated linear protofilaments composed of alpha- and beta-tubulin heterodimers. Microtubules grow by the addition of GTP-tubulin dimers to the microtubule end, where a stabilizing cap forms. Below the cap, tubulin dimers are in GDP-bound state, owing to GTPase activity of alpha-tubulin. This chain is Tubulin beta-8 chain (TUBB8), found in Oryza sativa subsp. japonica (Rice).